Consider the following 119-residue polypeptide: Large ribosomal subunit protein bL20 (119 aa).

This sequence belongs to the bacterial ribosomal protein bL20 family.

In terms of biological role, binds directly to 23S ribosomal RNA and is necessary for the in vitro assembly process of the 50S ribosomal subunit. It is not involved in the protein synthesizing functions of that subunit. The protein is Large ribosomal subunit protein bL20 of Thiobacillus denitrificans (strain ATCC 25259 / T1).